The sequence spans 230 residues: 8-demethylnovobiocic acid C(8)-methyltransferase (230 aa).

The protein belongs to the methyltransferase superfamily.

It catalyses the reaction 8-desmethylnovobiocic acid + S-adenosyl-L-methionine = novobiocic acid + S-adenosyl-L-homocysteine + H(+). Its pathway is antibiotic biosynthesis; novobiocin biosynthesis. Functionally, C-methyltransferase that methylates 8-demethylnovobiocic acid to produce novobiocic acid in the novobiocin biosynthesis pathway. Novobiocin is an aminocoumarin family antibiotic that targets bacterial DNA gyrases. The sequence is that of 8-demethylnovobiocic acid C(8)-methyltransferase (novO) from Streptomyces niveus (Streptomyces spheroides).